The primary structure comprises 273 residues: Gamma-glutamyl cyclotransferase aclK (273 aa).

This sequence belongs to the class-I pyridoxal-phosphate-dependent aminotransferase family.

The enzyme catalyses an alpha-(gamma-L-glutamyl)-L-amino acid = 5-oxo-L-proline + an L-alpha-amino acid. The protein operates within mycotoxin biosynthesis. Its function is as follows. Gamma-glutamyl cyclotransferase; part of the gene cluster that mediates the biosynthesis of aspirochlorine (or antibiotic A30641), an unusual halogenated spiro compound with distinctive antifungal properties due to selective inhibition of protein biosynthesis, and which is also active against bacteria, viruses, and murine tumor cells. The non-ribosomal peptide synthetase (NRPS) aclP is responsible the formation of the diketopiperazine (DKP) core from the condensation of 2 phenylalanine residues. One Phe residue is tailored into chlorotyrosine by hydroxylation and chlorination, whereas the second Phe undergoes an unprecedented C-C bond cleavage to be converted into glycine. After formation of the DKP, sulfur is incorporated into the DKP by conjugation with glutathione by aclG, followed by its stepwise degradation to the thiol by aclI, aclJ and aclK, and the dithiol oxidation by aclT. In addition, oxygenases (aclB, aclC, aclL and aclO) and O-methyltransferases (aclM and aclU) act as tailoring enzymes to produce the intermediate dechloroaspirochlorine. Ultimately, chlorination of dechloroaspirochlorine by the halogenase aclH is the last step in the aspirochlorine pathway. In Aspergillus oryzae (strain ATCC 42149 / RIB 40) (Yellow koji mold), this protein is Gamma-glutamyl cyclotransferase aclK.